Here is a 1118-residue protein sequence, read N- to C-terminus: Constitutive coactivator of PPAR-gamma-like protein 1 (1118 aa).

The segment at 339-405 is interaction with YES1, SRC and FYN; sequence PPHYLAARPG…SLSEPAPLTL (67 aa). Residues 374–533 are disordered; sequence AKPVAPQVPS…GTVQPIPCLL (160 aa). Over residues 376–396 the composition is skewed to low complexity; it reads PVAPQVPSPGGAPGQGPYPYS. Polar residues-rich tracts occupy residues 405-420 and 435-447; these read LDTS…SYSN and SPIN…SPNH. Basic and acidic residues predominate over residues 481 to 502; it reads GWEKTGSHSEPQARGDPGDQTK. Polar residues predominate over residues 503-514; the sequence is AEGSSTASSGSQ. Thr655 is modified (phosphothreonine). An RNA binding region spans residues 829 to 1118; sequence ADQAAKVEKM…LEAAVLNKEE (290 aa). 3 positions are modified to omega-N-methylarginine: Arg873, Arg884, and Arg886. Residues 921–945 are disordered; that stretch reads AFSGSDSSRTSKSQGGVQPIPSQGG. Positions 924-936 are enriched in polar residues; it reads GSDSSRTSKSQGG. An N6-acetyllysine modification is found at Lys932. Ser960 is subject to Phosphoserine. 2 positions are modified to omega-N-methylarginine: Arg982 and Arg986. A Phosphoserine modification is found at Ser1023. The interval 1025 to 1102 is disordered; sequence EEVAKELKSK…HLNALSTDSA (78 aa). Over residues 1026–1037 the composition is skewed to basic and acidic residues; it reads EVAKELKSKSGE. Residues 1038-1051 are compositionally biased toward low complexity; sequence SKSSAMSSDGSLAE. Ser1044, Ser1045, and Ser1048 each carry phosphoserine. Over residues 1076 to 1101 the composition is skewed to polar residues; it reads HSESALNNDSKTCNTNPHLNALSTDS.

The protein belongs to the constitutive coactivator of PPAR-gamma family. As to quaternary structure, interacts with PURA. Interacts with SRC family protein kinases YES1, SRC and FYN. Upon tyrosine phosphorylation, interacts with PIK3R1. Interacts with IGF2BP1/IMP-1 in an RNA-dependent manner. Arg-982 is dimethylated, probably to asymmetric dimethylarginine. Post-translationally, phosphorylated on tyrosine by SRC family protein kinases upon oxidative stress, for instance following UV irradiation. As to expression, widely expressed. In gastric mucosa, detected in the bottom region of the foveolar epithelium (at protein level).

The protein resides in the cytoplasm. Its subcellular location is the cell membrane. Functionally, component of the oxidative stress-induced survival signaling. May regulate the activation of SRC family protein kinases. May act as a scaffolding protein enabling SRC family protein kinases to phosphorylate and activate PI3-kinase. Binds IGF2 RNA and promotes the production of IGF2 protein. The protein is Constitutive coactivator of PPAR-gamma-like protein 1 (FAM120A) of Homo sapiens (Human).